The chain runs to 331 residues: Tetraacyldisaccharide 4'-kinase (331 aa).

51–58 (TAGGAGKT) contacts ATP.

Belongs to the LpxK family.

The catalysed reaction is a lipid A disaccharide + ATP = a lipid IVA + ADP + H(+). The protein operates within glycolipid biosynthesis; lipid IV(A) biosynthesis; lipid IV(A) from (3R)-3-hydroxytetradecanoyl-[acyl-carrier-protein] and UDP-N-acetyl-alpha-D-glucosamine: step 6/6. Transfers the gamma-phosphate of ATP to the 4'-position of a tetraacyldisaccharide 1-phosphate intermediate (termed DS-1-P) to form tetraacyldisaccharide 1,4'-bis-phosphate (lipid IVA). The polypeptide is Tetraacyldisaccharide 4'-kinase (Rhodospirillum rubrum (strain ATCC 11170 / ATH 1.1.1 / DSM 467 / LMG 4362 / NCIMB 8255 / S1)).